Consider the following 149-residue polypeptide: 3-hydroxyacyl-[acyl-carrier-protein] dehydratase FabZ (149 aa).

Residue H48 is part of the active site.

It belongs to the thioester dehydratase family. FabZ subfamily.

Its subcellular location is the cytoplasm. The catalysed reaction is a (3R)-hydroxyacyl-[ACP] = a (2E)-enoyl-[ACP] + H2O. Its function is as follows. Involved in unsaturated fatty acids biosynthesis. Catalyzes the dehydration of short chain beta-hydroxyacyl-ACPs and long chain saturated and unsaturated beta-hydroxyacyl-ACPs. This chain is 3-hydroxyacyl-[acyl-carrier-protein] dehydratase FabZ, found in Thermomicrobium roseum (strain ATCC 27502 / DSM 5159 / P-2).